The sequence spans 138 residues: ATP synthase epsilon chain (138 aa).

Belongs to the ATPase epsilon chain family. In terms of assembly, F-type ATPases have 2 components, CF(1) - the catalytic core - and CF(0) - the membrane proton channel. CF(1) has five subunits: alpha(3), beta(3), gamma(1), delta(1), epsilon(1). CF(0) has three main subunits: a, b and c.

It is found in the cell inner membrane. Its function is as follows. Produces ATP from ADP in the presence of a proton gradient across the membrane. This chain is ATP synthase epsilon chain, found in Psychrobacter cryohalolentis (strain ATCC BAA-1226 / DSM 17306 / VKM B-2378 / K5).